The sequence spans 371 residues: Chaperone protein DnaJ (371 aa).

The J domain maps to 5–69 (DYYEILGIAK…QKRAAYDQHG (65 aa)). The CR-type zinc-finger motif lies at 127–205 (GASKEIHITT…CRGQGKVEEP (79 aa)). 8 residues coordinate Zn(2+): Cys140, Cys143, Cys157, Cys160, Cys179, Cys182, Cys193, and Cys196. CXXCXGXG motif repeat units lie at residues 140-147 (CEHCKGSG), 157-164 (CTTCRGVG), 179-186 (CPRCHGQG), and 193-200 (CRQCRGQG).

This sequence belongs to the DnaJ family. Homodimer. Requires Zn(2+) as cofactor.

It localises to the cytoplasm. In terms of biological role, participates actively in the response to hyperosmotic and heat shock by preventing the aggregation of stress-denatured proteins and by disaggregating proteins, also in an autonomous, DnaK-independent fashion. Unfolded proteins bind initially to DnaJ; upon interaction with the DnaJ-bound protein, DnaK hydrolyzes its bound ATP, resulting in the formation of a stable complex. GrpE releases ADP from DnaK; ATP binding to DnaK triggers the release of the substrate protein, thus completing the reaction cycle. Several rounds of ATP-dependent interactions between DnaJ, DnaK and GrpE are required for fully efficient folding. Also involved, together with DnaK and GrpE, in the DNA replication of plasmids through activation of initiation proteins. The protein is Chaperone protein DnaJ of Hamiltonella defensa subsp. Acyrthosiphon pisum (strain 5AT).